The sequence spans 314 residues: 2-desacetyl-2-hydroxyethyl bacteriochlorophyllide A dehydrogenase (314 aa).

It functions in the pathway porphyrin-containing compound metabolism; bacteriochlorophyll biosynthesis (light-independent). Its function is as follows. This protein catalyzes the penultimate step in bacteriochlorophyll a biosynthesis. The chain is 2-desacetyl-2-hydroxyethyl bacteriochlorophyllide A dehydrogenase (bchC) from Rhodobacter capsulatus (strain ATCC BAA-309 / NBRC 16581 / SB1003).